The following is a 370-amino-acid chain: Phosphoserine aminotransferase (370 aa).

R38 provides a ligand contact to L-glutamate. 4 residues coordinate pyridoxal 5'-phosphate: W101, T143, D166, and Q189. K190 bears the N6-(pyridoxal phosphate)lysine mark. 243–244 (NT) contacts pyridoxal 5'-phosphate.

It belongs to the class-V pyridoxal-phosphate-dependent aminotransferase family. SerC subfamily. In terms of assembly, homodimer. It depends on pyridoxal 5'-phosphate as a cofactor.

The protein localises to the cytoplasm. The enzyme catalyses O-phospho-L-serine + 2-oxoglutarate = 3-phosphooxypyruvate + L-glutamate. It carries out the reaction 4-(phosphooxy)-L-threonine + 2-oxoglutarate = (R)-3-hydroxy-2-oxo-4-phosphooxybutanoate + L-glutamate. It participates in amino-acid biosynthesis; L-serine biosynthesis; L-serine from 3-phospho-D-glycerate: step 2/3. Its pathway is cofactor biosynthesis; pyridoxine 5'-phosphate biosynthesis; pyridoxine 5'-phosphate from D-erythrose 4-phosphate: step 3/5. Catalyzes the reversible conversion of 3-phosphohydroxypyruvate to phosphoserine and of 3-hydroxy-2-oxo-4-phosphonooxybutanoate to phosphohydroxythreonine. In Methanosarcina mazei (strain ATCC BAA-159 / DSM 3647 / Goe1 / Go1 / JCM 11833 / OCM 88) (Methanosarcina frisia), this protein is Phosphoserine aminotransferase.